Consider the following 296-residue polypeptide: Transmembrane protein 156 (296 aa).

Topologically, residues 1–4 (MTKT) are cytoplasmic. Residues 5-25 (ALLKLFVAIVITFILILPEYF) traverse the membrane as a helical segment. Residues 26 to 211 (KTPKERTLEL…EMDIKNITCS (186 aa)) lie on the Extracellular side of the membrane. Residues asparagine 45 and asparagine 156 are each glycosylated (N-linked (GlcNAc...) asparagine). The helical transmembrane segment at 212 to 232 (MKITWYILVLLVFIFLIILTI) threads the bilayer. Residues 233–296 (RKILEGQRRV…QEVLPPIPEL (64 aa)) lie on the Cytoplasmic side of the membrane.

The protein resides in the membrane. The chain is Transmembrane protein 156 (TMEM156) from Homo sapiens (Human).